The primary structure comprises 307 residues: N-acetylmuramic acid 6-phosphate etherase (307 aa).

One can recognise an SIS domain in the interval 62-225 (IVAAFQKGGR…TTASMIRIGK (164 aa)). Glu-90 acts as the Proton donor in catalysis. Glu-121 is an active-site residue.

Belongs to the GCKR-like family. MurNAc-6-P etherase subfamily. As to quaternary structure, homodimer.

The enzyme catalyses N-acetyl-D-muramate 6-phosphate + H2O = N-acetyl-D-glucosamine 6-phosphate + (R)-lactate. Its pathway is amino-sugar metabolism; 1,6-anhydro-N-acetylmuramate degradation. The protein operates within amino-sugar metabolism; N-acetylmuramate degradation. It participates in cell wall biogenesis; peptidoglycan recycling. Its function is as follows. Specifically catalyzes the cleavage of the D-lactyl ether substituent of MurNAc 6-phosphate, producing GlcNAc 6-phosphate and D-lactate. Together with AnmK, is also required for the utilization of anhydro-N-acetylmuramic acid (anhMurNAc) either imported from the medium or derived from its own cell wall murein, and thus plays a role in cell wall recycling. This is N-acetylmuramic acid 6-phosphate etherase from Rhizobium rhizogenes (strain K84 / ATCC BAA-868) (Agrobacterium radiobacter).